The chain runs to 268 residues: Phosphoethanolamine/phosphocholine phosphatase (268 aa).

Asp32 serves as the catalytic Nucleophile. Residues Asp32 and Asp34 each coordinate Mg(2+). Asp34 serves as the catalytic Proton donor. 2 residues coordinate substrate: Asp43 and Asp123. Position 203 (Asp203) interacts with Mg(2+).

This sequence belongs to the HAD-like hydrolase superfamily. PHOSPHO family. Requires Mg(2+) as cofactor. Expressed at sites of mineralization in bone and cartilage. Highly expressed in hypertrophic chondrocytes compared to non-chondrogenic tissues. Expressed in chondrocytes but not in heart, liver, lung, kidney, spleen, muscle, adipose tissues not duodenum. In diaphyseal cortical bone, it is expressed in the osteoid layer of the periosteum, forming surfaces of growing osteons, and newly formed osteocytes, whereas it is not expressed in the endosteum and closed osteons. In growth plate cartilage, it is limited to the early hypertrophic chondrocytes and the ossification groove of Ranvier. Highly expressed on the mineralization surfaces of the cartilage remnants and trabecular bone within the primary spongiosa. Expressed in 17-day-old embryonic calvaria, the osteoid present on the intramembranous and periosteal bone surfaces but not in soft tissues examined.

It localises to the extracellular vesicle. The enzyme catalyses phosphoethanolamine + H2O = ethanolamine + phosphate. It carries out the reaction phosphocholine + H2O = choline + phosphate. Its function is as follows. Phosphatase that has a high activity toward phosphoethanolamine (PEA) and phosphocholine (PCho). Involved in the generation of inorganic phosphate for bone mineralization. The protein is Phosphoethanolamine/phosphocholine phosphatase (PHOSPHO1) of Gallus gallus (Chicken).